Here is a 301-residue protein sequence, read N- to C-terminus: Probable alpha-L-glutamate ligase 1 (301 aa).

Residues 104–287 (MQLMSRRGIG…VAGAIIAFIE (184 aa)) form the ATP-grasp domain. ATP-binding positions include Lys141, 178–179 (EY), Asp187, and 211–213 (RSN). Mg(2+) is bound by residues Asp248, Glu260, and Asn262. Residues Asp248, Glu260, and Asn262 each contribute to the Mn(2+) site.

The protein belongs to the RimK family. Mg(2+) is required as a cofactor. The cofactor is Mn(2+).

The protein is Probable alpha-L-glutamate ligase 1 of Shewanella amazonensis (strain ATCC BAA-1098 / SB2B).